Here is a 94-residue protein sequence, read N- to C-terminus: DNA-binding protein HU (94 aa).

A disordered region spans residues 56-94 (QKGKEGKVPGSDKTYKTEDKRVPKFKPGKTLKQKVEEGK). The span at 68 to 77 (KTYKTEDKRV) shows a compositional bias: basic and acidic residues. Residues 78-87 (PKFKPGKTLK) are compositionally biased toward basic residues.

This sequence belongs to the bacterial histone-like protein family. Homodimer.

Histone-like DNA-binding protein which is capable of wrapping DNA to stabilize it, and thus to prevent its denaturation under extreme environmental conditions. The polypeptide is DNA-binding protein HU (hup) (Helicobacter pylori (strain ATCC 700392 / 26695) (Campylobacter pylori)).